Here is a 215-residue protein sequence, read N- to C-terminus: Ribonuclease T (215 aa).

In terms of domain architecture, Exonuclease spans 21–195 (VVIDVETAGF…YDSKKTAELF (175 aa)). Residues aspartate 24, glutamate 26, histidine 182, and aspartate 187 each coordinate Mg(2+). Histidine 182 serves as the catalytic Proton donor/acceptor.

This sequence belongs to the RNase T family. In terms of assembly, homodimer. The cofactor is Mg(2+).

In terms of biological role, trims short 3' overhangs of a variety of RNA species, leaving a one or two nucleotide 3' overhang. Responsible for the end-turnover of tRNA: specifically removes the terminal AMP residue from uncharged tRNA (tRNA-C-C-A). Also appears to be involved in tRNA biosynthesis. The polypeptide is Ribonuclease T (Wigglesworthia glossinidia brevipalpis).